The primary structure comprises 161 residues: Ribosome maturation factor RimP (161 aa).

The protein belongs to the RimP family.

The protein localises to the cytoplasm. Its function is as follows. Required for maturation of 30S ribosomal subunits. The chain is Ribosome maturation factor RimP from Rickettsia africae (strain ESF-5).